A 408-amino-acid polypeptide reads, in one-letter code: tRNA(Met) cytidine acetate ligase (408 aa).

ATP contacts are provided by residues 7–20, Gly-102, Asn-170, and 195–196; these read IVEY…HKYH and RI.

It belongs to the TmcAL family.

The protein resides in the cytoplasm. It catalyses the reaction cytidine(34) in elongator tRNA(Met) + acetate + ATP = N(4)-acetylcytidine(34) in elongator tRNA(Met) + AMP + diphosphate. Its function is as follows. Catalyzes the formation of N(4)-acetylcytidine (ac(4)C) at the wobble position of elongator tRNA(Met), using acetate and ATP as substrates. First activates an acetate ion to form acetyladenylate (Ac-AMP) and then transfers the acetyl group to tRNA to form ac(4)C34. The chain is tRNA(Met) cytidine acetate ligase from Clostridium kluyveri (strain NBRC 12016).